We begin with the raw amino-acid sequence, 201 residues long: FMN-dependent NADH:quinone oxidoreductase (201 aa).

FMN contacts are provided by residues serine 9 and 93 to 96 (MYNF).

This sequence belongs to the azoreductase type 1 family. Homodimer. FMN is required as a cofactor.

It catalyses the reaction 2 a quinone + NADH + H(+) = 2 a 1,4-benzosemiquinone + NAD(+). The enzyme catalyses N,N-dimethyl-1,4-phenylenediamine + anthranilate + 2 NAD(+) = 2-(4-dimethylaminophenyl)diazenylbenzoate + 2 NADH + 2 H(+). Functionally, quinone reductase that provides resistance to thiol-specific stress caused by electrophilic quinones. In terms of biological role, also exhibits azoreductase activity. Catalyzes the reductive cleavage of the azo bond in aromatic azo compounds to the corresponding amines. This is FMN-dependent NADH:quinone oxidoreductase from Bradyrhizobium sp. (strain BTAi1 / ATCC BAA-1182).